The chain runs to 225 residues: Cardiotrophin-like cytokine factor 1 (225 aa).

The first 27 residues, 1–27 (MDLRAGDSWGMLACLCTVLWHLPAVPA), serve as a signal peptide directing secretion. A glycan (N-linked (GlcNAc...) asparagine) is linked at asparagine 29.

It belongs to the IL-6 superfamily. In terms of assembly, forms a heteromeric complex with cardiotrophin-like cytokine CRLF1/CLF-1; the CRLF1-CLCF1 complex is a ligand for the ciliary neurotrophic factor receptor/CNTFR. The CRLF1-CLCF1 heterodimer binds SORL1 (via N-terminal ectodomain); within this complex, the interaction is mediated predominantly by the CRLF1 moiety. The tripartite signaling complex formed by CRLF1, CLCF1 and CNTFR also binds SORL1.

Its subcellular location is the secreted. Its function is as follows. In complex with CRLF1, forms a heterodimeric neurotropic cytokine that plays a crucial role during neuronal development. Also stimulates B-cells. Binds to and activates the ILST/gp130 receptor. The polypeptide is Cardiotrophin-like cytokine factor 1 (Clcf1) (Mus musculus (Mouse)).